A 208-amino-acid polypeptide reads, in one-letter code: MSRYRGSVCRQCRRENMKLFLKGDRCFSDKCSFDRRSYPPGQHGQRRMKHSDYGIQLREKQKVRRIYGIGEKQFRIIFKKADSLKGITGETLLSLLERRLDNVVFRLGFTSSRTQGRHFVRHNHFTVNGKKVNIPSYIIKAGDVVELKEKSKKVQAITDSLDTVVRRGVPQWLELDKDGFKGVVKGMPAREDITLPIQEQLIVELYSK.

Residues 98–168 (RRLDNVVFRL…DSLDTVVRRG (71 aa)) enclose the S4 RNA-binding domain.

Belongs to the universal ribosomal protein uS4 family. Part of the 30S ribosomal subunit. Contacts protein S5. The interaction surface between S4 and S5 is involved in control of translational fidelity.

In terms of biological role, one of the primary rRNA binding proteins, it binds directly to 16S rRNA where it nucleates assembly of the body of the 30S subunit. Its function is as follows. With S5 and S12 plays an important role in translational accuracy. The protein is Small ribosomal subunit protein uS4 of Desulforapulum autotrophicum (strain ATCC 43914 / DSM 3382 / VKM B-1955 / HRM2) (Desulfobacterium autotrophicum).